Consider the following 66-residue polypeptide: Large ribosomal subunit protein uL29 (66 aa).

Belongs to the universal ribosomal protein uL29 family.

In Syntrophobacter fumaroxidans (strain DSM 10017 / MPOB), this protein is Large ribosomal subunit protein uL29.